The following is a 392-amino-acid chain: Probable protein phosphatase 2C 22 (392 aa).

The tract at residues methionine 1–serine 26 is disordered. Residues arginine 89 to leucine 356 enclose the PPM-type phosphatase domain. Mn(2+) is bound by residues aspartate 133, glycine 134, aspartate 304, and aspartate 347.

It belongs to the PP2C family. Requires Mg(2+) as cofactor. Mn(2+) is required as a cofactor.

The enzyme catalyses O-phospho-L-seryl-[protein] + H2O = L-seryl-[protein] + phosphate. It carries out the reaction O-phospho-L-threonyl-[protein] + H2O = L-threonyl-[protein] + phosphate. The polypeptide is Probable protein phosphatase 2C 22 (Arabidopsis thaliana (Mouse-ear cress)).